Here is a 336-residue protein sequence, read N- to C-terminus: Glyceraldehyde-3-phosphate dehydrogenase (336 aa).

NAD(+) contacts are provided by residues 12 to 13, Asp-34, Arg-78, and Ser-120; that span reads RI. D-glyceraldehyde 3-phosphate-binding positions include 151–153 and Thr-182; that span reads SCT. Cys-152 functions as the Nucleophile in the catalytic mechanism. Asn-183 is an NAD(+) binding site. Residues 211-212 and Arg-234 each bind D-glyceraldehyde 3-phosphate; that span reads NG. Residue Asn-316 coordinates NAD(+).

It belongs to the glyceraldehyde-3-phosphate dehydrogenase family. Homotetramer.

The protein localises to the cytoplasm. The catalysed reaction is D-glyceraldehyde 3-phosphate + phosphate + NAD(+) = (2R)-3-phospho-glyceroyl phosphate + NADH + H(+). Its pathway is carbohydrate degradation; glycolysis; pyruvate from D-glyceraldehyde 3-phosphate: step 1/5. Functionally, catalyzes the oxidative phosphorylation of glyceraldehyde 3-phosphate (G3P) to 1,3-bisphosphoglycerate (BPG) using the cofactor NAD. The first reaction step involves the formation of a hemiacetal intermediate between G3P and a cysteine residue, and this hemiacetal intermediate is then oxidized to a thioester, with concomitant reduction of NAD to NADH. The reduced NADH is then exchanged with the second NAD, and the thioester is attacked by a nucleophilic inorganic phosphate to produce BPG. The chain is Glyceraldehyde-3-phosphate dehydrogenase (gap) from Heyndrickxia coagulans (Weizmannia coagulans).